The chain runs to 103 residues: Small ribosomal subunit protein uS10 (103 aa).

Belongs to the universal ribosomal protein uS10 family. As to quaternary structure, part of the 30S ribosomal subunit.

Its function is as follows. Involved in the binding of tRNA to the ribosomes. The chain is Small ribosomal subunit protein uS10 from Blochmanniella pennsylvanica (strain BPEN).